We begin with the raw amino-acid sequence, 580 residues long: Glutamine--tRNA ligase (580 aa).

A 'HIGH' region motif is present at residues 41-51 (PEPNGYLHIGH). Residues 42-44 (EPN) and 48-54 (HIGHAKA) each bind ATP. Positions 74 and 218 each coordinate L-glutamine. Residues T237, 285-286 (RL), and 293-295 (MSK) contribute to the ATP site. The short motif at 292–296 (VMSKR) is the 'KMSKS' region element.

The protein belongs to the class-I aminoacyl-tRNA synthetase family. In terms of assembly, monomer.

It is found in the cytoplasm. The enzyme catalyses tRNA(Gln) + L-glutamine + ATP = L-glutaminyl-tRNA(Gln) + AMP + diphosphate. The protein is Glutamine--tRNA ligase of Xylella fastidiosa (strain 9a5c).